We begin with the raw amino-acid sequence, 1097 residues long: Putative regulator of nonsense transcripts 1 (1097 aa).

A compositionally biased stretch (low complexity) spans 42–53 (SQTQTQGHTQSQ). Residues 42 to 67 (SQTQTQGHTQSQLDNQLNGPDDGLHN) form a disordered region. Positions 96 to 254 (TKDLPVHACR…NKLEELWKDN (159 aa)) constitute a Upf1 CH-rich domain. The Zn(2+) site is built by Cys-104, Cys-108, Cys-119, Ser-122, Cys-127, His-137, His-141, Cys-147, Cys-165, Cys-168, Cys-191, and Cys-195. Residues 104 to 137 (CRSYCGIHDPACVVYCNTSKKWFCNGRGNTSGSH) are C3H. The interval 119 to 147 (CNTSKKWFCNGRGNTSGSHIVNHLVRAKC) is CC/SHH/C. Residues 165–195 (CYNCGCRNVFLLGFIPAKADSVVVLLCRQPC) form a C4 region. ATP contacts are provided by residues Gln-457, 474–481 (GPPGTGKT), Tyr-683, and Glu-813. Residues 977–998 (QGQTNGPAAGRGAMKGKSGRGG) are disordered.

This sequence belongs to the DNA2/NAM7 helicase family.

The protein resides in the cytoplasm. It is found in the P-body. It carries out the reaction ATP + H2O = ADP + phosphate + H(+). In terms of biological role, RNA-dependent helicase required for nonsense-mediated decay (NMD) of aberrant mRNAs containing premature stop codons and modulates the expression level of normal mRNAs. The formation of an rent1-rent2-rent3 surveillance complex is believed to activate NMD. The chain is Putative regulator of nonsense transcripts 1 (rent1) from Takifugu rubripes (Japanese pufferfish).